Consider the following 574-residue polypeptide: Protein misato (574 aa).

The protein belongs to the misato family.

The protein localises to the mitochondrion. The chain is Protein misato (mst) from Drosophila melanogaster (Fruit fly).